Reading from the N-terminus, the 190-residue chain is MNVEKFEGAELHVHVTGSISAALVPWWIHWLREFQPELVVNVSVTPAASRFLAVRALRHLANGKVWVDSWDDPDVPPEVNSGKSGASECFLVFPATLDTVMRLAQGRADSPALMMLQLTDAPLVIADTFPGSNEIVENNVQTLKLRPNVEFAPRVNGVRASNRQTAEVGFNLPGALAAANRMRKEGRSGE.

Belongs to the HFCD (homooligomeric flavin containing Cys decarboxylase) superfamily.

The enzyme catalyses [cypemycin](1-18)-L-Cys-L-Leu-L-Val-L-Cys + A = C(3,19),S(21)-[cypemycin](1-18)-L-Ala-L-Leu-N-thioethenyl-L-valinamide + hydrogen sulfide + AH2 + CO2. In terms of biological role, involved in the biosynthesis of the lanaridin cypemycin. The polypeptide is Cypemycin cysteine dehydrogenase (decarboxylating) (Streptomyces sp).